We begin with the raw amino-acid sequence, 269 residues long: 1-(5-phosphoribosyl)-5-[(5-phosphoribosylamino)methylideneamino] imidazole-4-carboxamide isomerase (269 aa).

Asp10 acts as the Proton acceptor in catalysis. Residue Asp132 is the Proton donor of the active site.

Belongs to the HisA/HisF family.

The protein resides in the cytoplasm. It carries out the reaction 1-(5-phospho-beta-D-ribosyl)-5-[(5-phospho-beta-D-ribosylamino)methylideneamino]imidazole-4-carboxamide = 5-[(5-phospho-1-deoxy-D-ribulos-1-ylimino)methylamino]-1-(5-phospho-beta-D-ribosyl)imidazole-4-carboxamide. It functions in the pathway amino-acid biosynthesis; L-histidine biosynthesis; L-histidine from 5-phospho-alpha-D-ribose 1-diphosphate: step 4/9. This is 1-(5-phosphoribosyl)-5-[(5-phosphoribosylamino)methylideneamino] imidazole-4-carboxamide isomerase from Xylella fastidiosa (strain Temecula1 / ATCC 700964).